The primary structure comprises 228 residues: Ribosomal RNA small subunit methyltransferase G (228 aa).

S-adenosyl-L-methionine contacts are provided by residues glycine 89, leucine 94, 140–141 (VE), and arginine 159.

This sequence belongs to the methyltransferase superfamily. RNA methyltransferase RsmG family.

It localises to the cytoplasm. It carries out the reaction guanosine(527) in 16S rRNA + S-adenosyl-L-methionine = N(7)-methylguanosine(527) in 16S rRNA + S-adenosyl-L-homocysteine. In terms of biological role, specifically methylates the N7 position of guanine in position 527 of 16S rRNA. In Burkholderia multivorans (strain ATCC 17616 / 249), this protein is Ribosomal RNA small subunit methyltransferase G.